We begin with the raw amino-acid sequence, 142 residues long: Type II secretion system core protein G (142 aa).

The propeptide at 1 to 8 (MQRRQQSG) is leader sequence. Residue Phe9 is modified to N-methylphenylalanine. A helical membrane pass occupies residues 9–29 (FTLIEIMVVVVILGILAALVV). The segment at 121–142 (SLGADGKEGGSDNDADIGNWDN) is disordered.

It belongs to the GSP G family. In terms of assembly, type II secretion system is composed of four main components: the outer membrane complex, the inner membrane complex, the cytoplasmic secretion ATPase and the periplasm-spanning pseudopilus. Forms homomultimers. Interacts with pseudopilin tip ternary complex made of XcpX, XcpU, XcpV and XcpW. Interacts with PilA. Post-translationally, cleaved by the prepilin peptidase. In terms of processing, methylated by prepilin peptidase at the amino group of the N-terminal phenylalanine once the leader sequence is cleaved.

The protein localises to the cell inner membrane. Functionally, core component of the type II secretion system required for the energy-dependent secretion of extracellular factors such as proteases and toxins from the periplasm. Pseudopilin (pilin-like) protein that polymerizes to form the pseudopilus. Further polymerization triggers pseudopilus growth. Type II pseudopilus confers increased bacterial adhesive capabilities. In Pseudomonas aeruginosa (strain ATCC 15692 / DSM 22644 / CIP 104116 / JCM 14847 / LMG 12228 / 1C / PRS 101 / PAO1), this protein is Type II secretion system core protein G (xcpT).